The sequence spans 328 residues: L-lactate dehydrogenase (328 aa).

NAD(+) is bound by residues Val-18, Glu-39, Lys-46, Tyr-71, and 85–86; that span reads GA. The substrate site is built by Gln-88 and Arg-94. NAD(+)-binding positions include Ser-107, 124–126, and Ser-149; that span reads AAN. 126 to 129 lines the substrate pocket; that stretch reads NPVD. 154–157 contributes to the substrate binding site; that stretch reads DSAR. Positions 159 and 174 each coordinate beta-D-fructose 1,6-bisphosphate. The active-site Proton acceptor is His-181. Tyr-226 bears the Phosphotyrosine mark. Thr-235 is a substrate binding site.

Belongs to the LDH/MDH superfamily. LDH family. Homotetramer.

The protein resides in the cytoplasm. The catalysed reaction is (S)-lactate + NAD(+) = pyruvate + NADH + H(+). It functions in the pathway fermentation; pyruvate fermentation to lactate; (S)-lactate from pyruvate: step 1/1. Its activity is regulated as follows. Allosterically activated by fructose 1,6-bisphosphate (FBP). Its function is as follows. Catalyzes the conversion of lactate to pyruvate. The polypeptide is L-lactate dehydrogenase (Streptococcus pneumoniae (strain ATCC BAA-255 / R6)).